The chain runs to 202 residues: Glycerol-3-phosphate acyltransferase (202 aa).

A run of 5 helical transmembrane segments spans residues 3 to 23 (NLII…LILA), 87 to 107 (LLWS…YLLF), 118 to 138 (GAMI…WVVI), 144 to 164 (ISSL…FIFN), and 167 to 187 (LEIH…YKHL).

Belongs to the PlsY family. In terms of assembly, probably interacts with PlsX.

It is found in the cell inner membrane. The catalysed reaction is an acyl phosphate + sn-glycerol 3-phosphate = a 1-acyl-sn-glycero-3-phosphate + phosphate. It participates in lipid metabolism; phospholipid metabolism. In terms of biological role, catalyzes the transfer of an acyl group from acyl-phosphate (acyl-PO(4)) to glycerol-3-phosphate (G3P) to form lysophosphatidic acid (LPA). This enzyme utilizes acyl-phosphate as fatty acyl donor, but not acyl-CoA or acyl-ACP. This is Glycerol-3-phosphate acyltransferase from Campylobacter jejuni subsp. jejuni serotype O:2 (strain ATCC 700819 / NCTC 11168).